A 465-amino-acid polypeptide reads, in one-letter code: Alpha-2A adrenergic receptor (465 aa).

The Extracellular portion of the chain corresponds to 1–48; the sequence is MFRQEQPLAEGSFAPMGSLQPDAGNASWNGTEAPGGGARATPYSLQVT. 2 N-linked (GlcNAc...) asparagine glycosylation sites follow: asparagine 25 and asparagine 29. The helical transmembrane segment at 49–74 threads the bilayer; sequence LTLVCLAGLLMLLTVFGNVLVIIAVF. Over 75 to 85 the chain is Cytoplasmic; sequence TSRALKAPQNL. A helical membrane pass occupies residues 86 to 111; that stretch reads FLVSLASADILVATLVIPFSLANEVM. Residues 112-121 are Extracellular-facing; the sequence is GYWYFGKAWC. The cysteines at positions 121 and 203 are disulfide-linked. A helical membrane pass occupies residues 122–144; that stretch reads EIYLALDVLFCTSSIVHLCAISL. Residues 145-166 lie on the Cytoplasmic side of the membrane; the sequence is DRYWSITQAIEYNLKRTPRRIK. A helical transmembrane segment spans residues 167-187; that stretch reads AIIITVWVISAVISFPPLISI. Residues 188–209 lie on the Extracellular side of the membrane; sequence EKKGGGGGPQPAEPRCEINDQK. The helical transmembrane segment at 210 to 232 threads the bilayer; that stretch reads WYVISSCIGSFFAPCLIMILVYV. Topologically, residues 233–389 are cytoplasmic; that stretch reads RIYQIAKRRT…RQNREKRFTF (157 aa). The disordered stretch occupies residues 242-368; it reads TRVPPSRRGP…TPAAGPGEER (127 aa). Positions 313–330 are enriched in basic and acidic residues; sequence SSDHAERPPGPRRPERGP. Serine 346 is modified (phosphoserine). Arginine 368 carries the post-translational modification Omega-N-methylarginine. Residues 390-410 traverse the membrane as a helical segment; the sequence is VLAVVIGVFVVCWFPFFFTYT. Over 411–424 the chain is Extracellular; it reads LTAVGCSVPRTLFK. Residues 425 to 444 form a helical membrane-spanning segment; that stretch reads FFFWFGYCNSSLNPVIYTIF. The Cytoplasmic portion of the chain corresponds to 445 to 465; that stretch reads NHDFRRAFKKILCRGDRKRIV. Cysteine 457 carries the S-palmitoyl cysteine lipid modification.

The protein belongs to the G-protein coupled receptor 1 family. Adrenergic receptor subfamily. ADRA2A sub-subfamily.

The protein resides in the cell membrane. Its function is as follows. Alpha-2 adrenergic receptors mediate the catecholamine-induced inhibition of adenylate cyclase through the action of G proteins. The rank order of potency for agonists of this receptor is oxymetazoline &gt; clonidine &gt; epinephrine &gt; norepinephrine &gt; phenylephrine &gt; dopamine &gt; p-synephrine &gt; p-tyramine &gt; serotonin = p-octopamine. For antagonists, the rank order is yohimbine &gt; phentolamine = mianserine &gt; chlorpromazine = spiperone = prazosin &gt; propanolol &gt; alprenolol = pindolol. The chain is Alpha-2A adrenergic receptor from Homo sapiens (Human).